We begin with the raw amino-acid sequence, 37 residues long: Photosystem II reaction center protein K (37 aa).

Residues 1 to 15 (KLPEAYAIFDPLVDV) are Lumenal-facing. A helical transmembrane segment spans residues 16 to 30 (LPVIPVLFFALAFVV). At 31 to 37 (QAAVGFR) the chain is on the cytoplasmic side.

This sequence belongs to the PsbK family. As to quaternary structure, PSII is composed of 1 copy each of membrane proteins PsbA, PsbB, PsbC, PsbD, PsbE, PsbF, PsbH, PsbI, PsbJ, PsbK, PsbL, PsbM, PsbT, PsbX, PsbY, PsbZ, Psb30/Ycf12, peripheral proteins PsbO, CyanoQ (PsbQ), PsbU, PsbV and a large number of cofactors. It forms dimeric complexes. Requires PSII binds multiple chlorophylls, carotenoids and specific lipids. as cofactor.

It localises to the cellular thylakoid membrane. Functionally, one of the components of the core complex of photosystem II (PSII). PSII is a light-driven water:plastoquinone oxidoreductase that uses light energy to abstract electrons from H(2)O, generating O(2) and a proton gradient subsequently used for ATP formation. It consists of a core antenna complex that captures photons, and an electron transfer chain that converts photonic excitation into a charge separation. This chain is Photosystem II reaction center protein K, found in Thermostichus vulcanus (Synechococcus vulcanus).